The following is a 500-amino-acid chain: Enolase (500 aa).

Substrate-binding residues include H225 and E234. E277 functions as the Proton donor in the catalytic mechanism. D312, E361, and D386 together coordinate Mg(2+). Substrate contacts are provided by E361 and D386. K411 (proton acceptor) is an active-site residue. Substrate is bound by residues 438–441 and K462; that span reads SHRS.

The protein belongs to the enolase family. In terms of assembly, homodimer. Mg(2+) serves as cofactor.

It localises to the cytoplasm. The enzyme catalyses (2R)-2-phosphoglycerate = phosphoenolpyruvate + H2O. The protein operates within carbohydrate degradation; glycolysis; pyruvate from D-glyceraldehyde 3-phosphate: step 4/5. Functionally, enzyme of the glycolytic pathway. Glycolysis is essential in glial cells but not in neurons; neurons rely on the citric acid cycle for their energy needs, and on lactate and alanine secreted into the hemolymph by glial cells to fuel it. This is Enolase from Drosophila melanogaster (Fruit fly).